We begin with the raw amino-acid sequence, 132 residues long: Agouti-signaling protein (132 aa).

The signal sequence occupies residues 1–22; it reads MDVTRLLLATLLVFLCFFTAYS. An N-linked (GlcNAc...) asparagine glycan is attached at N39. Residues 61-87 are disordered; sequence QISRKEAEKKRSSKKEASMKKVARPRT. Basic and acidic residues predominate over residues 63 to 79; it reads SRKEAEKKRSSKKEASM. Disulfide bonds link C93-C108, C100-C114, C107-C125, C111-C132, and C116-C123. The Agouti domain maps to 93–132; that stretch reads CVATRDSCKPPAPACCDPCASCQCRFFRSACSCRVLSLNC.

It localises to the secreted. Involved in the regulation of melanogenesis. The binding of ASP to MC1R precludes alpha-MSH initiated signaling and thus blocks production of cAMP, leading to a down-regulation of eumelanogenesis (brown/black pigment) and thus increasing synthesis of pheomelanin (yellow/red pigment). The polypeptide is Agouti-signaling protein (ASIP) (Macaca maura (Moor macaque)).